Reading from the N-terminus, the 369-residue chain is Peridinin-chlorophyll a-binding protein 2, chloroplastic (369 aa).

The transit peptide at 1-56 (MVRSGKKAVVLATVAFCATSVVQKTCGFVPSPLRQRAAAAGAAASVATMFAPAAFA) directs the protein to the chloroplast. 2 consecutive repeat copies span residues 57-219 (DEIG…VPSG) and 220-369 (DTIG…AAQR).

Homotrimer.

The protein resides in the plastid. The protein localises to the chloroplast. Functionally, water-soluble antenna for capture of solar energy in the blue-green range. Peridinin is an asymmetric carotenoid. The sequence is that of Peridinin-chlorophyll a-binding protein 2, chloroplastic from Amphidinium carterae (Dinoflagellate).